A 200-amino-acid polypeptide reads, in one-letter code: Large ribosomal subunit protein uL4 (200 aa).

The disordered stretch occupies residues 42-65 (TRAQKTRSEVSGGGAKPWRQKGTG).

The protein belongs to the universal ribosomal protein uL4 family. In terms of assembly, part of the 50S ribosomal subunit.

Functionally, one of the primary rRNA binding proteins, this protein initially binds near the 5'-end of the 23S rRNA. It is important during the early stages of 50S assembly. It makes multiple contacts with different domains of the 23S rRNA in the assembled 50S subunit and ribosome. Its function is as follows. Forms part of the polypeptide exit tunnel. The chain is Large ribosomal subunit protein uL4 from Vibrio cholerae serotype O1 (strain ATCC 39541 / Classical Ogawa 395 / O395).